Here is a 105-residue protein sequence, read N- to C-terminus: Small ribosomal subunit protein uS10 (105 aa).

The protein belongs to the universal ribosomal protein uS10 family. Part of the 30S ribosomal subunit.

Functionally, involved in the binding of tRNA to the ribosomes. The sequence is that of Small ribosomal subunit protein uS10 from Synechocystis sp. (strain ATCC 27184 / PCC 6803 / Kazusa).